The primary structure comprises 750 residues: Photosystem I P700 chlorophyll a apoprotein A1 (750 aa).

The next 8 membrane-spanning stretches (helical) occupy residues 70-93 (VFSAHFGQLSIIFLWLSGMYFHGA), 156-179 (LYCTAIGALVFAALMLFAGWFHYH), 195-219 (LNHHLAGLLGLGSLSWAGHQVHVSL), 291-309 (IAHHHLAIAILFLIAGHMY), 346-369 (WHAQLSLNLAMLGSLTIVVAHHMY), 385-411 (LSLFTHHMWIGGFLIVGAAAHAAIFMV), 433-455 (AIISHLNWACIFLGFHSFGLYIH), and 531-549 (FLVHHIHAFTIHVTVLILL). [4Fe-4S] cluster contacts are provided by Cys573 and Cys582. The next 2 helical transmembrane spans lie at 589–610 (HVFLGLFWMYNAISVVIFHFSW) and 664–686 (LSAYGLFFLGAHFVWAFSLMFLF). His675 is a chlorophyll a' binding site. Residues Met683 and Tyr691 each coordinate chlorophyll a. Trp692 is a phylloquinone binding site. A helical transmembrane segment spans residues 724–744 (AVGVTHYLLGGIATTWAFFLA).

Belongs to the PsaA/PsaB family. As to quaternary structure, the PsaA/B heterodimer binds the P700 chlorophyll special pair and subsequent electron acceptors. PSI consists of a core antenna complex that captures photons, and an electron transfer chain that converts photonic excitation into a charge separation. The eukaryotic PSI reaction center is composed of at least 11 subunits. The cofactor is P700 is a chlorophyll a/chlorophyll a' dimer, A0 is one or more chlorophyll a, A1 is one or both phylloquinones and FX is a shared 4Fe-4S iron-sulfur center..

It is found in the plastid. The protein localises to the chloroplast thylakoid membrane. The enzyme catalyses reduced [plastocyanin] + hnu + oxidized [2Fe-2S]-[ferredoxin] = oxidized [plastocyanin] + reduced [2Fe-2S]-[ferredoxin]. PsaA and PsaB bind P700, the primary electron donor of photosystem I (PSI), as well as the electron acceptors A0, A1 and FX. PSI is a plastocyanin-ferredoxin oxidoreductase, converting photonic excitation into a charge separation, which transfers an electron from the donor P700 chlorophyll pair to the spectroscopically characterized acceptors A0, A1, FX, FA and FB in turn. Oxidized P700 is reduced on the lumenal side of the thylakoid membrane by plastocyanin. This is Photosystem I P700 chlorophyll a apoprotein A1 from Aethionema grandiflorum (Persian stone-cress).